A 333-amino-acid polypeptide reads, in one-letter code: Protein amalgam (333 aa).

Positions 1–23 (MARLRLLIGLIFCLAISLDSVLS) are cleaved as a signal peptide. Residues 25 to 128 (PVISQISKDV…VLVSATEKVT (104 aa)) form the Ig-like V-type domain. N45 and N86 each carry an N-linked (GlcNAc...) asparagine glycan. Disulfide bonds link C46/C117, C161/C208, and C251/C307. Ig-like C2-type domains are found at residues 139–223 (PVIA…RLIR) and 230–323 (PQIA…LHLF). N308 carries an N-linked (GlcNAc...) asparagine glycan.

It localises to the cell membrane. This chain is Protein amalgam (Ama), found in Drosophila melanogaster (Fruit fly).